Consider the following 356-residue polypeptide: Guanine nucleotide-binding protein alpha-2 subunit (356 aa).

The tract at residues 1 to 25 is disordered; sequence MGLCQSEEEKVGSQKSRAIDKEIKQ. Gly2 carries the N-myristoyl glycine lipid modification. A lipid anchor (S-palmitoyl cysteine) is attached at Cys4. The segment covering 7–25 has biased composition (basic and acidic residues); that stretch reads EEEKVGSQKSRAIDKEIKQ. The region spanning 14-338 is the G-alpha domain; sequence QKSRAIDKEI…TDTNQVQKIL (325 aa). The tract at residues 17–30 is G1 motif; sequence RAIDKEIKQNQSND. 13 residues coordinate GTP: Gln25, Gln27, Ser28, Asn29, Asp30, Val135, Glu160, Ala166, Val188, Glu254, Ser255, Cys257, and Phe310. Position 29 (Asn29) interacts with Mg(2+). Residues 158–166 form a G2 motif region; sequence FFENLDRIA. Ala166 serves as a coordination point for Mg(2+). Residues 181–190 form a G3 motif region; it reads RTKTTGIVEV. The G4 motif stretch occupies residues 250–257; sequence MRLFESIC. A G5 motif region spans residues 308–313; the sequence is QKFEAL.

This sequence belongs to the G-alpha family. G(q) subfamily. As to quaternary structure, g proteins are composed of 3 units; alpha, beta and gamma. The alpha chain contains the guanine nucleotide binding site. Requires Mg(2+) as cofactor.

Its function is as follows. Guanine nucleotide-binding proteins (G proteins) are involved as modulators or transducers in various transmembrane signaling systems. Involved in behavioral responses to P.aeruginosa by controlling the expression of daf-7, a member of the TGF-beta family, in ASJ sensory neurons. This chain is Guanine nucleotide-binding protein alpha-2 subunit (gpa-2), found in Caenorhabditis briggsae.